Reading from the N-terminus, the 393-residue chain is Anhydro-N-acetylmuramic acid kinase (393 aa).

Gly-9–Asp-16 provides a ligand contact to ATP.

Belongs to the anhydro-N-acetylmuramic acid kinase family.

The catalysed reaction is 1,6-anhydro-N-acetyl-beta-muramate + ATP + H2O = N-acetyl-D-muramate 6-phosphate + ADP + H(+). Its pathway is amino-sugar metabolism; 1,6-anhydro-N-acetylmuramate degradation. It participates in cell wall biogenesis; peptidoglycan recycling. Catalyzes the specific phosphorylation of 1,6-anhydro-N-acetylmuramic acid (anhMurNAc) with the simultaneous cleavage of the 1,6-anhydro ring, generating MurNAc-6-P. Is required for the utilization of anhMurNAc either imported from the medium or derived from its own cell wall murein, and thus plays a role in cell wall recycling. The sequence is that of Anhydro-N-acetylmuramic acid kinase from Acidithiobacillus ferrooxidans (strain ATCC 23270 / DSM 14882 / CIP 104768 / NCIMB 8455) (Ferrobacillus ferrooxidans (strain ATCC 23270)).